A 41-amino-acid chain; its full sequence is CGILGLGGVGHMGVKAFGLHVTVISSSDKFVVDVAASNLDK.

The protein belongs to the zinc-containing alcohol dehydrogenase family. Zn(2+) is required as a cofactor.

The enzyme catalyses (E)-cinnamyl alcohol + NADP(+) = (E)-cinnamaldehyde + NADPH + H(+). The catalysed reaction is (E)-coniferol + NADP(+) = (E)-coniferaldehyde + NADPH + H(+). It catalyses the reaction (E)-sinapyl alcohol + NADP(+) = (E)-sinapaldehyde + NADPH + H(+). It carries out the reaction (E)-4-coumaroyl alcohol + NADP(+) = (E)-4-coumaraldehyde + NADPH + H(+). The enzyme catalyses (E)-caffeyl alcohol + NADP(+) = (E)-caffeyl aldehyde + NADPH + H(+). It functions in the pathway aromatic compound metabolism; phenylpropanoid biosynthesis. Its function is as follows. Involved in lignin biosynthesis. Catalyzes the final step specific for the production of lignin monomers, like coniferyl alcohol, sinapyl alcohol and 4-coumaryl alcohol. This is Probable cinnamyl alcohol dehydrogenase 2 from Pseudotsuga menziesii (Douglas-fir).